Reading from the N-terminus, the 86-residue chain is Omega-theraphotoxin-Hhn1a 2 (86 aa).

Residues 1-21 (MKSIVFVALLGLALLAVVCSA) form the signal peptide. The propeptide occupies 22–50 (SEDAHKELLKEVVRAMVVDKTDAVQAEER). Disulfide bonds link Cys-52/Cys-66, Cys-59/Cys-71, and Cys-65/Cys-78.

The protein belongs to the neurotoxin 10 (Hwtx-1) family. 17 (Hntx-9) subfamily. As to expression, expressed by the venom gland.

The protein resides in the secreted. Functionally, ion channel inhibitor. The protein is Omega-theraphotoxin-Hhn1a 2 of Cyriopagopus hainanus (Chinese bird spider).